The chain runs to 227 residues: Ureidoacrylate amidohydrolase RutB (227 aa).

Catalysis depends on Asp22, which acts as the Proton acceptor. Lys131 is an active-site residue. The active-site Nucleophile is the Cys164.

Belongs to the isochorismatase family. RutB subfamily.

It carries out the reaction (Z)-3-ureidoacrylate + H2O + H(+) = (Z)-3-aminoacrylate + NH4(+) + CO2. The enzyme catalyses (Z)-3-ureidoacrylate + H2O = (Z)-3-aminoacrylate + carbamate + H(+). It catalyses the reaction (Z)-2-methylureidoacrylate + H2O + H(+) = (Z)-2-methylaminoacrylate + NH4(+) + CO2. In terms of biological role, hydrolyzes ureidoacrylate to form aminoacrylate and carbamate. The carbamate hydrolyzes spontaneously, thereby releasing one of the nitrogen atoms of the pyrimidine ring as ammonia and one of its carbon atoms as CO2. This is Ureidoacrylate amidohydrolase RutB from Azorhizobium caulinodans (strain ATCC 43989 / DSM 5975 / JCM 20966 / LMG 6465 / NBRC 14845 / NCIMB 13405 / ORS 571).